We begin with the raw amino-acid sequence, 1368 residues long: DNA-directed RNA polymerase subunit beta (1368 aa).

Belongs to the RNA polymerase beta chain family. As to quaternary structure, the RNAP catalytic core consists of 2 alpha, 1 beta, 1 beta' and 1 omega subunit. When a sigma factor is associated with the core the holoenzyme is formed, which can initiate transcription.

It carries out the reaction RNA(n) + a ribonucleoside 5'-triphosphate = RNA(n+1) + diphosphate. Functionally, DNA-dependent RNA polymerase catalyzes the transcription of DNA into RNA using the four ribonucleoside triphosphates as substrates. The chain is DNA-directed RNA polymerase subunit beta from Legionella pneumophila subsp. pneumophila (strain Philadelphia 1 / ATCC 33152 / DSM 7513).